A 396-amino-acid chain; its full sequence is Elongation factor Tu (396 aa).

The tr-type G domain maps to lysine 10–valine 205. The interval glycine 19 to threonine 26 is G1. A GTP-binding site is contributed by glycine 19–threonine 26. Threonine 26 lines the Mg(2+) pocket. Positions glycine 62–asparagine 66 are G2. A G3 region spans residues aspartate 83–glycine 86. GTP-binding positions include aspartate 83–histidine 87 and asparagine 138–aspartate 141. Residues asparagine 138 to aspartate 141 are G4. A G5 region spans residues serine 175–leucine 177.

It belongs to the TRAFAC class translation factor GTPase superfamily. Classic translation factor GTPase family. EF-Tu/EF-1A subfamily. As to quaternary structure, monomer.

It is found in the cytoplasm. It catalyses the reaction GTP + H2O = GDP + phosphate + H(+). Functionally, GTP hydrolase that promotes the GTP-dependent binding of aminoacyl-tRNA to the A-site of ribosomes during protein biosynthesis. The chain is Elongation factor Tu from Corynebacterium kroppenstedtii (strain DSM 44385 / JCM 11950 / CIP 105744 / CCUG 35717).